The following is a 301-amino-acid chain: Haloalkane dehalogenase (301 aa).

Aspartate 123 acts as the Nucleophile in catalysis. The active-site Proton donor is aspartate 250. Catalysis depends on histidine 279, which acts as the Proton acceptor.

The protein belongs to the haloalkane dehalogenase family. Type 1 subfamily. In terms of assembly, monomer.

It catalyses the reaction 1-haloalkane + H2O = a halide anion + a primary alcohol + H(+). Functionally, catalyzes hydrolytic cleavage of carbon-halogen bonds in halogenated aliphatic compounds, leading to the formation of the corresponding primary alcohols, halide ions and protons. In Phenylobacterium zucineum (strain HLK1), this protein is Haloalkane dehalogenase.